A 323-amino-acid chain; its full sequence is Phosphatidylethanolamine:ceramide ethanolaminephosphotransferase (323 aa).

Residues 1–26 (MAVPPVEMYSGSFWNRMRKPLPLRTQ) lie on the Cytoplasmic side of the membrane. A helical membrane pass occupies residues 27-47 (VIRFTVVFVIVSFILAVALQI). Over 48 to 73 (THERMPDPKVTKPLPDLGFEVLHKYP) the chain is Extracellular. The helical transmembrane segment at 74-94 (FLFSVADCCIGFLNILSVFTA) threads the bilayer. Residues 95 to 147 (FKLYLLHRHCVGSGEPELPCNIPGVSRFFLSVWLCKENCRIELRNVHTIAWIR) lie on the Cytoplasmic side of the membrane. A helical membrane pass occupies residues 148–168 (FITSYALLLLSRSVIMVVTSL). Topologically, residues 169-211 (PNPDDLCQDPPKIENRVKDVILTVLTAGAGSIHCGDLMYSGHT) are extracellular. The active site involves His210. Residues 212 to 232 (VILTLHLMFHWIYGAMVHWSF) form a helical membrane-spanning segment. Arg233 is a topological domain (cytoplasmic). The helical transmembrane segment at 234–254 (PVVTVVAIFGYYCIVASRFHY) threads the bilayer. Residues His253 and Asp257 contribute to the active site. Topologically, residues 255-257 (TDD) are extracellular. A helical transmembrane segment spans residues 258–278 (VLVAIYLTIATFIAVGHNADG). Residues 279–323 (APWQLQLFIRWLPCCGANSREVTEDGVPVAIVIKNEEMMNFEGKS) lie on the Cytoplasmic side of the membrane.

The protein belongs to the sphingomyelin synthase family.

It localises to the membrane. In terms of biological role, bidirectional lipid ethanolaminephosphotransferase capable of converting phosphatidylethanolamine (PE) and ceramide to ethanolamine-phosphorylceramide (EPC) and diacylglycerol (DAG) and vice versa. Direction is dependent on the relative concentrations of DAG and ceramide as phosphoethanolamine acceptors. Does not function strictly as a SM synthase. Essential for viability of the pathogenic bloodstream stage of this human protozoan parasite and, consequently, can be considered as potential drug target. This Trypanosoma brucei brucei (strain 927/4 GUTat10.1) protein is Phosphatidylethanolamine:ceramide ethanolaminephosphotransferase.